A 103-amino-acid chain; its full sequence is DNA-directed RNA polymerase subunit omega (103 aa).

The interval E52–I103 is disordered. Over residues P62–I103 the composition is skewed to basic and acidic residues.

Belongs to the RNA polymerase subunit omega family. In terms of assembly, the RNAP catalytic core consists of 2 alpha, 1 beta, 1 beta' and 1 omega subunit. When a sigma factor is associated with the core the holoenzyme is formed, which can initiate transcription.

It catalyses the reaction RNA(n) + a ribonucleoside 5'-triphosphate = RNA(n+1) + diphosphate. Its function is as follows. Promotes RNA polymerase assembly. Latches the N- and C-terminal regions of the beta' subunit thereby facilitating its interaction with the beta and alpha subunits. In Streptococcus pneumoniae serotype 19F (strain G54), this protein is DNA-directed RNA polymerase subunit omega.